A 363-amino-acid polypeptide reads, in one-letter code: NADH-quinone oxidoreductase subunit H (363 aa).

The next 10 membrane-spanning stretches (helical) occupy residues 29 to 49 (VLKI…YVVW), 62 to 82 (GPMY…KLLF), 94 to 114 (VIFV…WAVV), 127 to 147 (VGLL…ILAG), 166 to 186 (VVSY…AAGS), 202 to 222 (FFDW…VSGV), 239 to 257 (IVAG…LFFL), 264 to 286 (ILVS…QGWV), 293 to 313 (LIDW…LFFA), and 339 to 359 (FIPL…SGVI).

This sequence belongs to the complex I subunit 1 family. In terms of assembly, NDH-1 is composed of 14 different subunits. Subunits NuoA, H, J, K, L, M, N constitute the membrane sector of the complex.

It localises to the cell inner membrane. The enzyme catalyses a quinone + NADH + 5 H(+)(in) = a quinol + NAD(+) + 4 H(+)(out). NDH-1 shuttles electrons from NADH, via FMN and iron-sulfur (Fe-S) centers, to quinones in the respiratory chain. The immediate electron acceptor for the enzyme in this species is believed to be ubiquinone. Couples the redox reaction to proton translocation (for every two electrons transferred, four hydrogen ions are translocated across the cytoplasmic membrane), and thus conserves the redox energy in a proton gradient. This subunit may bind ubiquinone. This is NADH-quinone oxidoreductase subunit H from Xylella fastidiosa (strain M12).